The chain runs to 234 residues: Ubiquinone biosynthesis O-methyltransferase (234 aa).

Arg-39, Gly-59, Asp-80, and Met-124 together coordinate S-adenosyl-L-methionine.

Belongs to the methyltransferase superfamily. UbiG/COQ3 family.

The enzyme catalyses a 3-demethylubiquinol + S-adenosyl-L-methionine = a ubiquinol + S-adenosyl-L-homocysteine + H(+). The catalysed reaction is a 3-(all-trans-polyprenyl)benzene-1,2-diol + S-adenosyl-L-methionine = a 2-methoxy-6-(all-trans-polyprenyl)phenol + S-adenosyl-L-homocysteine + H(+). The protein operates within cofactor biosynthesis; ubiquinone biosynthesis. In terms of biological role, O-methyltransferase that catalyzes the 2 O-methylation steps in the ubiquinone biosynthetic pathway. The protein is Ubiquinone biosynthesis O-methyltransferase of Aliivibrio fischeri (strain ATCC 700601 / ES114) (Vibrio fischeri).